We begin with the raw amino-acid sequence, 128 residues long: Sulfurtransferase TusD (128 aa).

Cysteine 78 acts as the Cysteine persulfide intermediate in catalysis.

This sequence belongs to the DsrE/TusD family. Heterohexamer, formed by a dimer of trimers. The hexameric TusBCD complex contains 2 copies each of TusB, TusC and TusD. The TusBCD complex interacts with TusE.

It localises to the cytoplasm. Part of a sulfur-relay system required for 2-thiolation of 5-methylaminomethyl-2-thiouridine (mnm(5)s(2)U) at tRNA wobble positions. Accepts sulfur from TusA and transfers it in turn to TusE. This is Sulfurtransferase TusD from Erwinia tasmaniensis (strain DSM 17950 / CFBP 7177 / CIP 109463 / NCPPB 4357 / Et1/99).